The sequence spans 182 residues: Putative manganese efflux pump MntP (182 aa).

The next 5 helical transmembrane spans lie at 3–23 (ILLL…SNGA), 42–62 (FFQG…VGFI), 65–85 (IDHF…IFDS), 126–146 (IWFS…AATF), and 161–181 (ILGG…HLGI).

Belongs to the MntP (TC 9.B.29) family.

The protein resides in the cell inner membrane. Probably functions as a manganese efflux pump. This Campylobacter hominis (strain ATCC BAA-381 / DSM 21671 / CCUG 45161 / LMG 19568 / NCTC 13146 / CH001A) protein is Putative manganese efflux pump MntP.